The primary structure comprises 797 residues: MYLETRRAIFVFWIFLQVQGTKDISINIYHSETKDIDNPPRNETTESTEKMYKMSTMRRIFDLAKHRTKRSAFFPTGVKVCPQESMKQILDSLQAYYRLRVCQEAVWEAYRIFLDRIPDTGEYQDWVSICQQETFCLFDIGKNFSNSQEHLDLLQQRIKQRSFPDRKDEISAEKTLGEPGETIVISTDVANVSLGPFPLTPDDTLLNEILDNTLNDTKMPTTERETEFAVLEEQRVELSVSLVNQKFKAELADSQSPYYQELAGKSQLQMQKIFKKLPGFKKIHVLGFRPKKEKDGSSSTEMQLTAIFKRHSAEAKSPASDLLSFDSNKIESEEVYHGTMEEDKQPEIYLTATDLKRLISKALEEEQSLDVGTIQFTDEIAGSLPAFGPDTQSELPTSFAVITEDATLSPELPPVEPQLETVDGAEHGLPDTSWSPPAMASTSLSEAPPFFMASSIFSLTDQGTTDTMATDQTMLVPGLTIPTSDYSAISQLALGISHPPASSDDSRSSAGGEDMVRHLDEMDLSDTPAPSEVPELSEYVSVPDHFLEDTTPVSALQYITTSSMTIAPKGRELVVFFSLRVANMAFSNDLFNKSSLEYRALEQQFTQLLVPYLRSNLTGFKQLEILNFRNGSVIVNSKMKFAKSVPYNLTKAVHGVLEDFRSAAAQQLHLEIDSYSLNIEPADQADPCKFLACGEFAQCVKNERTEEAECRCKPGYDSQGSLDGLEPGLCGPGTKECEVLQGKGAPCRLPDHSENQAYKTSVKKFQNQQNNKVISKRNSELLTVEYEEFNHQDWEGN.

Residues 1–20 (MYLETRRAIFVFWIFLQVQG) form the signal peptide. N42, N143, N191, and N215 each carry an N-linked (GlcNAc...) asparagine glycan. The 123-residue stretch at 232-354 (EEQRVELSVS…QPEIYLTATD (123 aa)) folds into the SEA 1 domain. O-linked (GalNAc...) threonine glycosylation is found at T403, T421, T432, and T442. The region spanning 571-684 (RELVVFFSLR…YSLNIEPADQ (114 aa)) is the SEA 2 domain. Residues N592 and N616 are each glycosylated (N-linked (GlcNAc...) asparagine). Residues 621–629 (KQLEILNFR) carry the Heparin- and hyaluronan-binding motif. N-linked (GlcNAc...) asparagine glycans are attached at residues N630 and N648.

In terms of processing, the N-terminus is blocked. Post-translationally, highly glycosylated (N- and O-linked carbohydrates and sialic acid). In terms of tissue distribution, expressed in the retina (at protein level). In the retina, specifically expressed by cone and rod photoreceptor cells. Localizes to cone and rod photoreceptor cells surrounding the interphotoreceptor matrix of the retina.

Its subcellular location is the cell projection. The protein resides in the cilium. The protein localises to the photoreceptor outer segment. It is found in the secreted. It localises to the extracellular space. Its subcellular location is the extracellular matrix. The protein resides in the interphotoreceptor matrix. The protein localises to the photoreceptor inner segment. Its function is as follows. Chondroitin sulfate-, heparin- and hyaluronan-binding protein. May serve to form a basic macromolecular scaffold comprising the insoluble interphotoreceptor matrix. In Homo sapiens (Human), this protein is Interphotoreceptor matrix proteoglycan 1.